A 40-amino-acid polypeptide reads, in one-letter code: U2-ctenitoxin-Pr1a (40 aa).

Disulfide bonds link Cys-2–Cys-17, Cys-9–Cys-22, Cys-16–Cys-32, and Cys-24–Cys-30.

As to expression, expressed by the venom gland.

The protein resides in the secreted. In terms of biological role, neurotoxin. This is U2-ctenitoxin-Pr1a from Phoneutria reidyi (Brazilian Amazonian armed spider).